The following is a 347-amino-acid chain: Heat-inducible transcription repressor HrcA (347 aa).

Belongs to the HrcA family.

Functionally, negative regulator of class I heat shock genes (grpE-dnaK-dnaJ and groELS operons). Prevents heat-shock induction of these operons. In Lactiplantibacillus plantarum (strain ATCC BAA-793 / NCIMB 8826 / WCFS1) (Lactobacillus plantarum), this protein is Heat-inducible transcription repressor HrcA.